The chain runs to 347 residues: UDP-3-O-acylglucosamine N-acyltransferase (347 aa).

His-242 (proton acceptor) is an active-site residue.

It belongs to the transferase hexapeptide repeat family. LpxD subfamily. As to quaternary structure, homotrimer.

The catalysed reaction is a UDP-3-O-[(3R)-3-hydroxyacyl]-alpha-D-glucosamine + a (3R)-hydroxyacyl-[ACP] = a UDP-2-N,3-O-bis[(3R)-3-hydroxyacyl]-alpha-D-glucosamine + holo-[ACP] + H(+). Its pathway is bacterial outer membrane biogenesis; LPS lipid A biosynthesis. Functionally, catalyzes the N-acylation of UDP-3-O-acylglucosamine using 3-hydroxyacyl-ACP as the acyl donor. Is involved in the biosynthesis of lipid A, a phosphorylated glycolipid that anchors the lipopolysaccharide to the outer membrane of the cell. The sequence is that of UDP-3-O-acylglucosamine N-acyltransferase from Dechloromonas aromatica (strain RCB).